We begin with the raw amino-acid sequence, 289 residues long: Diaminopimelate epimerase (289 aa).

Residues N13, Q47, and N67 each contribute to the substrate site. Residue C76 is the Proton donor of the active site. Substrate is bound by residues 77–78, N167, N200, and 218–219; these read GN and ER. Residue C227 is the Proton acceptor of the active site. 228–229 serves as a coordination point for substrate; it reads GT.

Belongs to the diaminopimelate epimerase family. As to quaternary structure, homodimer.

It localises to the cytoplasm. The enzyme catalyses (2S,6S)-2,6-diaminopimelate = meso-2,6-diaminopimelate. Its pathway is amino-acid biosynthesis; L-lysine biosynthesis via DAP pathway; DL-2,6-diaminopimelate from LL-2,6-diaminopimelate: step 1/1. Its function is as follows. Catalyzes the stereoinversion of LL-2,6-diaminopimelate (L,L-DAP) to meso-diaminopimelate (meso-DAP), a precursor of L-lysine and an essential component of the bacterial peptidoglycan. The polypeptide is Diaminopimelate epimerase (Burkholderia pseudomallei (strain K96243)).